Here is a 219-residue protein sequence, read N- to C-terminus: Acetylxylan esterase (219 aa).

S15 serves as the catalytic Nucleophile. Catalysis depends on charge relay system residues D191 and H194.

This sequence belongs to the 'GDSL' lipolytic enzyme family. As to quaternary structure, homooctamer, presenting a unique donut-shaped quaternary structure built of two staggered tetrameric rings. The eight active sites are organized in four closely situated pairs, which face the relatively wide internal cavity.

It is found in the cytoplasm. It carries out the reaction Deacetylation of xylans and xylo-oligosaccharides.. It functions in the pathway glycan degradation; xylan degradation. Acetylxylan esterase involved in the degradation of xylan, a major structural heterogeneous polysaccharide found in plant biomass representing the second most abundant polysaccharide in the biosphere, after cellulose. Cleaves acetyl side groups from the xylose backbone units of the hemicellulolytic polymer xylan and xylo-oligosaccharides. Hydrolyzes about 20%-30% of the available acetyl groups on fully acetylated birch wood xylan. Completely deacetylates xylobiose peracetate (fully acetylated), and is active on both the alpha- and beta-forms of the sugar. Also hydrolyzes fully acetylated methyl-beta-D-xylopyranoside and methyl-beta-D-glucopyranoside, and the synthetic substrates 2-naphthyl acetate, 4-nitrophenyl acetate, 4-methylumbelliferyl acetate, and phenyl acetate. The polypeptide is Acetylxylan esterase (Geobacillus stearothermophilus (Bacillus stearothermophilus)).